We begin with the raw amino-acid sequence, 503 residues long: Lysine--tRNA ligase (503 aa).

Positions 410 and 417 each coordinate Mg(2+).

This sequence belongs to the class-II aminoacyl-tRNA synthetase family. In terms of assembly, homodimer. Mg(2+) is required as a cofactor.

It localises to the cytoplasm. The catalysed reaction is tRNA(Lys) + L-lysine + ATP = L-lysyl-tRNA(Lys) + AMP + diphosphate. In Prochlorococcus marinus (strain MIT 9211), this protein is Lysine--tRNA ligase.